The chain runs to 35 residues: Photosystem II reaction center protein T (35 aa).

Residues 3-23 traverse the membrane as a helical segment; sequence ALVYTFLLVSTLGIIFFAIFF.

This sequence belongs to the PsbT family. In terms of assembly, PSII is composed of 1 copy each of membrane proteins PsbA, PsbB, PsbC, PsbD, PsbE, PsbF, PsbH, PsbI, PsbJ, PsbK, PsbL, PsbM, PsbT, PsbY, PsbZ, Psb30/Ycf12, at least 3 peripheral proteins of the oxygen-evolving complex and a large number of cofactors. It forms dimeric complexes.

The protein resides in the plastid. It localises to the chloroplast thylakoid membrane. Functionally, found at the monomer-monomer interface of the photosystem II (PS II) dimer, plays a role in assembly and dimerization of PSII. PSII is a light-driven water plastoquinone oxidoreductase, using light energy to abstract electrons from H(2)O, generating a proton gradient subsequently used for ATP formation. This Taxus brevifolia (Pacific yew) protein is Photosystem II reaction center protein T.